The chain runs to 204 residues: Thiamine-phosphate synthase (204 aa).

Residues 32–36 (QLRMK) and Asp-64 each bind 4-amino-2-methyl-5-(diphosphooxymethyl)pyrimidine. Asp-65 and Asp-84 together coordinate Mg(2+). Thr-103 contacts 4-amino-2-methyl-5-(diphosphooxymethyl)pyrimidine. 129 to 131 (TTT) lines the 2-[(2R,5Z)-2-carboxy-4-methylthiazol-5(2H)-ylidene]ethyl phosphate pocket. Lys-132 contacts 4-amino-2-methyl-5-(diphosphooxymethyl)pyrimidine. Residue Gly-165 coordinates 2-[(2R,5Z)-2-carboxy-4-methylthiazol-5(2H)-ylidene]ethyl phosphate.

It belongs to the thiamine-phosphate synthase family. It depends on Mg(2+) as a cofactor.

It catalyses the reaction 2-[(2R,5Z)-2-carboxy-4-methylthiazol-5(2H)-ylidene]ethyl phosphate + 4-amino-2-methyl-5-(diphosphooxymethyl)pyrimidine + 2 H(+) = thiamine phosphate + CO2 + diphosphate. The enzyme catalyses 2-(2-carboxy-4-methylthiazol-5-yl)ethyl phosphate + 4-amino-2-methyl-5-(diphosphooxymethyl)pyrimidine + 2 H(+) = thiamine phosphate + CO2 + diphosphate. The catalysed reaction is 4-methyl-5-(2-phosphooxyethyl)-thiazole + 4-amino-2-methyl-5-(diphosphooxymethyl)pyrimidine + H(+) = thiamine phosphate + diphosphate. Its pathway is cofactor biosynthesis; thiamine diphosphate biosynthesis; thiamine phosphate from 4-amino-2-methyl-5-diphosphomethylpyrimidine and 4-methyl-5-(2-phosphoethyl)-thiazole: step 1/1. Condenses 4-methyl-5-(beta-hydroxyethyl)thiazole monophosphate (THZ-P) and 2-methyl-4-amino-5-hydroxymethyl pyrimidine pyrophosphate (HMP-PP) to form thiamine monophosphate (TMP). In Bacteroides fragilis (strain YCH46), this protein is Thiamine-phosphate synthase.